We begin with the raw amino-acid sequence, 218 residues long: Small ribosomal subunit protein uS3 (218 aa).

One can recognise a KH type-2 domain in the interval I38–K106.

This sequence belongs to the universal ribosomal protein uS3 family. In terms of assembly, part of the 30S ribosomal subunit. Forms a tight complex with proteins S10 and S14.

Its function is as follows. Binds the lower part of the 30S subunit head. Binds mRNA in the 70S ribosome, positioning it for translation. The polypeptide is Small ribosomal subunit protein uS3 (Geobacillus sp. (strain WCH70)).